Reading from the N-terminus, the 875-residue chain is Neurotrypsin (875 aa).

Positions 1 to 20 are cleaved as a signal peptide; that stretch reads MTLARFVLALVLGALPEVVG. The N-linked (GlcNAc...) asparagine glycan is linked to Asn-26. Residues 30 to 87 form a disordered region; it reads HHRHRHSPPPGPQYPYYLPTHQRPPRTRPPPPLPRFPRPPRALPAQRPHALQAGHTPR. The span at 56-71 shows a compositional bias: pro residues; sequence TRPPPPLPRFPRPPRA. In terms of domain architecture, Kringle spans 93-165; that stretch reads CPAGELWVSV…GKVDWGYCDC (73 aa). Cystine bridges form between Cys-93-Cys-165, Cys-109-Cys-149, Cys-138-Cys-163, Cys-195-Cys-259, Cys-208-Cys-269, Cys-239-Cys-249, Cys-305-Cys-369, Cys-318-Cys-379, Cys-349-Cys-359, Cys-412-Cys-475, Cys-425-Cys-485, Cys-455-Cys-465, Cys-525-Cys-589, Cys-538-Cys-599, Cys-569-Cys-579, Cys-619-Cys-750, Cys-661-Cys-677, Cys-765-Cys-831, Cys-794-Cys-808, and Cys-821-Cys-850. SRCR domains lie at 170–271, 280–381, 387–487, and 500–601; these read VRLR…TCSF, IRLV…SCTP, IRLA…ACYP, and VRLM…ICDY. Residues 619–630 are zymogen activation region; it reads CGLRLLHRRQKR. A Peptidase S1 domain is found at 631-874; it reads IIGGKNSLRG…FVPWIKSVTK (244 aa). The active-site Charge relay system is His-676. N-linked (GlcNAc...) asparagine glycosylation is present at Asn-683. Catalysis depends on Asp-726, which acts as the Charge relay system. Ser-825 acts as the Charge relay system in catalysis.

It belongs to the peptidase S1 family.

The protein resides in the secreted. Functionally, plays a role in neuronal plasticity and the proteolytic action may subserve structural reorganizations associated with learning and memory operations. The chain is Neurotrypsin (PRSS12) from Macaca mulatta (Rhesus macaque).